The primary structure comprises 205 residues: Recombination protein RecR (205 aa).

The segment at 58-73 (CKKCHTISDHELCAIC) adopts a C4-type zinc-finger fold. Residues 81 to 177 (RVVCIVEDIR…KISTIARGIP (97 aa)) form the Toprim domain.

It belongs to the RecR family.

May play a role in DNA repair. It seems to be involved in an RecBC-independent recombinational process of DNA repair. It may act with RecF and RecO. This chain is Recombination protein RecR, found in Cytophaga hutchinsonii (strain ATCC 33406 / DSM 1761 / CIP 103989 / NBRC 15051 / NCIMB 9469 / D465).